A 660-amino-acid polypeptide reads, in one-letter code: Leucine-rich repeat transmembrane protein FLRT2 (660 aa).

An N-terminal signal peptide occupies residues 1-35; it reads MGLQTTKWPSHGAFFLKSWLIISLGLYSQVSKLLA. 2 disulfides stabilise this stretch: cysteine 36–cysteine 42 and cysteine 40–cysteine 49. In terms of domain architecture, LRRNT spans 36 to 63; the sequence is CPSVCRCDRNFVYCNERSLTSVPLGIPE. Residues 36–541 lie on the Extracellular side of the membrane; that stretch reads CPSVCRCDRN…TTSHSMGSPF (506 aa). LRR repeat units lie at residues 64-85, 89-109, 110-131, 134-155, 160-181, 182-202, 205-225, 231-252, 253-274, and 277-298; these read GVTV…AELH, SVHT…NLPK, NVRV…ALAQ, KLEE…DGAF, SLKL…LPVD, LQEL…AFQN, SLER…AEGT, KLKE…LPGT, HLIR…AFSN, and KLER…VFDN. N-linked (GlcNAc...) asparagine glycosylation is present at asparagine 202. A glycan (N-linked (GlcNAc...) asparagine) is linked at asparagine 298. An LRRCT domain is found at 310 to 362; that stretch reads NPWFCDCSIKWVTEWLKYIPSSLNVRGFMCQGPEQVRGMAVRELNMNLLSCPT. Cystine bridges form between cysteine 314-cysteine 339 and cysteine 316-cysteine 360. Positions 373 to 409 are enriched in low complexity; that stretch reads APSTASPTTQPPTLSIPNPSRSYTPPTPTTSKLPTIP. Residues 373 to 413 form a disordered region; that stretch reads APSTASPTTQPPTLSIPNPSRSYTPPTPTTSKLPTIPDWDG. One can recognise a Fibronectin type-III domain in the interval 419-517; sequence PPISERIQLS…ICSEATTHAS (99 aa). 2 N-linked (GlcNAc...) asparagine glycosylation sites follow: asparagine 433 and asparagine 521. Residues 542-562 form a helical membrane-spanning segment; sequence LLAGLIGGAVIFVLVVLLSVF. The Cytoplasmic segment spans residues 563–660; that stretch reads CWHMHKKGRY…SVPDLEHCHT (98 aa).

In terms of assembly, self-associates (via leucine-rich repeats), giving rise to homooligomers. Interacts with FGFR1. Interacts with FGFR2. Interacts (via extracellular domain) with ADGRL1/LPHN1. Interacts (via extracellular domain) with ADGRL3 (via olfactomedin-like domain). Interacts (via extracellular domain) with UNC5D (via the first Ig-like domain). Can also interact (via extracellular domain) with UNC5B, but with much lower affinity. Interacts (via extracellular domain) with FN1. Post-translationally, N-glycosylated. In terms of processing, proteolytic cleavage in the juxtamembrane region gives rise to a soluble ectodomain. Cleavage is probably effected by a metalloprotease. In terms of tissue distribution, expressed in pancreas, skeletal muscle, brain, and heart.

It is found in the cell membrane. The protein resides in the endoplasmic reticulum membrane. It localises to the cell junction. Its subcellular location is the focal adhesion. The protein localises to the secreted. It is found in the extracellular space. The protein resides in the extracellular matrix. It localises to the microsome membrane. Its subcellular location is the synapse. The protein localises to the synaptosome. Its function is as follows. Functions in cell-cell adhesion, cell migration and axon guidance. Mediates cell-cell adhesion via its interactions with ADGRL3 and probably also other latrophilins that are expressed at the surface of adjacent cells. May play a role in the migration of cortical neurons during brain development via its interaction with UNC5D. Mediates axon growth cone collapse and plays a repulsive role in neuron guidance via its interaction with UNC5D, and possibly also other UNC-5 family members. Plays a role in fibroblast growth factor-mediated signaling cascades. Required for normal organization of the cardiac basement membrane during embryogenesis, and for normal embryonic epicardium and heart morphogenesis. The polypeptide is Leucine-rich repeat transmembrane protein FLRT2 (FLRT2) (Homo sapiens (Human)).